We begin with the raw amino-acid sequence, 524 residues long: Bifunctional purine biosynthesis protein PurH (524 aa).

An MGS-like domain is found at 1–145 (MIKQALLSVS…KNHRDVTVIV (145 aa)).

Belongs to the PurH family.

It carries out the reaction (6R)-10-formyltetrahydrofolate + 5-amino-1-(5-phospho-beta-D-ribosyl)imidazole-4-carboxamide = 5-formamido-1-(5-phospho-D-ribosyl)imidazole-4-carboxamide + (6S)-5,6,7,8-tetrahydrofolate. The enzyme catalyses IMP + H2O = 5-formamido-1-(5-phospho-D-ribosyl)imidazole-4-carboxamide. The protein operates within purine metabolism; IMP biosynthesis via de novo pathway; 5-formamido-1-(5-phospho-D-ribosyl)imidazole-4-carboxamide from 5-amino-1-(5-phospho-D-ribosyl)imidazole-4-carboxamide (10-formyl THF route): step 1/1. It participates in purine metabolism; IMP biosynthesis via de novo pathway; IMP from 5-formamido-1-(5-phospho-D-ribosyl)imidazole-4-carboxamide: step 1/1. The chain is Bifunctional purine biosynthesis protein PurH from Cupriavidus taiwanensis (strain DSM 17343 / BCRC 17206 / CCUG 44338 / CIP 107171 / LMG 19424 / R1) (Ralstonia taiwanensis (strain LMG 19424)).